We begin with the raw amino-acid sequence, 689 residues long: DNA ligase (689 aa).

NAD(+) is bound by residues 51-55 (DSEYD), 100-101 (SL), and Glu-129. Lys-131 functions as the N6-AMP-lysine intermediate in the catalytic mechanism. 4 residues coordinate NAD(+): Arg-152, Glu-189, Lys-308, and Lys-332. The Zn(2+) site is built by Cys-426, Cys-429, Cys-444, and Cys-450. Residues 609–689 (ADEQPLKGQT…ELLALLAANR (81 aa)) form the BRCT domain.

This sequence belongs to the NAD-dependent DNA ligase family. LigA subfamily. Requires Mg(2+) as cofactor. Mn(2+) serves as cofactor.

The enzyme catalyses NAD(+) + (deoxyribonucleotide)n-3'-hydroxyl + 5'-phospho-(deoxyribonucleotide)m = (deoxyribonucleotide)n+m + AMP + beta-nicotinamide D-nucleotide.. In terms of biological role, DNA ligase that catalyzes the formation of phosphodiester linkages between 5'-phosphoryl and 3'-hydroxyl groups in double-stranded DNA using NAD as a coenzyme and as the energy source for the reaction. It is essential for DNA replication and repair of damaged DNA. In Shewanella oneidensis (strain ATCC 700550 / JCM 31522 / CIP 106686 / LMG 19005 / NCIMB 14063 / MR-1), this protein is DNA ligase.